Here is a 583-residue protein sequence, read N- to C-terminus: Laccase-21 (583 aa).

A signal peptide spans 1–29; the sequence is MGIAKIPAVLWLLACAVLTFAVAISPAHG. Plastocyanin-like domains lie at 39–155 and 165–323; these read FITE…PKHG and KEIP…YYTG. Asparagine 85 carries an N-linked (GlcNAc...) asparagine glycan. The Cu cation site is built by histidine 89, histidine 91, histidine 134, and histidine 136. 7 N-linked (GlcNAc...) asparagine glycosylation sites follow: asparagine 282, asparagine 311, asparagine 384, asparagine 387, asparagine 399, asparagine 409, and asparagine 446. The Plastocyanin-like 3 domain maps to 436-567; it reads FPNNPAPVFV…NTVFIVKDGK (132 aa). 8 residues coordinate Cu cation: histidine 484, histidine 487, histidine 489, histidine 546, cysteine 547, histidine 548, histidine 552, and methionine 557.

This sequence belongs to the multicopper oxidase family. Requires Cu cation as cofactor.

The protein resides in the secreted. The protein localises to the extracellular space. Its subcellular location is the apoplast. The enzyme catalyses 4 hydroquinone + O2 = 4 benzosemiquinone + 2 H2O. In terms of biological role, lignin degradation and detoxification of lignin-derived products. In Oryza sativa subsp. japonica (Rice), this protein is Laccase-21 (LAC21).